The following is a 198-amino-acid chain: Small ribosomal subunit protein uS2 (198 aa).

Belongs to the universal ribosomal protein uS2 family.

This Methanothermobacter thermautotrophicus (strain ATCC 29096 / DSM 1053 / JCM 10044 / NBRC 100330 / Delta H) (Methanobacterium thermoautotrophicum) protein is Small ribosomal subunit protein uS2 (rps2).